The sequence spans 225 residues: Lipoarabinomannan carrier protein LprG (225 aa).

A signal peptide spans 1-21 (MRNRIRLALIPVAVAAIALAG). Cys22 carries the N-palmitoyl cysteine lipid modification. Residue Cys22 is the site of S-diacylglycerol cysteine attachment.

This sequence belongs to the LppX/LprAFG lipoprotein family. Post-translationally, modified by Lgt on Cys-22 with an S-linked diacylglyceral, signal peptide is removed by LspA, Cys-22 is further modifed with a fatty acid on its amino group by Lnt yielding a triacylated protein.

The protein resides in the cell inner membrane. In terms of biological role, helps membrane protein MAB_2807 (P55) transport triacylglycerides (TAG) across the inner cell membrane into the periplasm and probably ultimately to the outer membrane. Binds TAG in its hydrophobic cavity and transfers it between lipid bilayers. TAG probably regulates lipid metabolism and growth regulation and plays a structural role in the outer membrane. Also binds mannosides, lipoarabinomannan and lipomannan and various glycolipids in the same cavity. In Mycobacteroides abscessus (strain ATCC 19977 / DSM 44196 / CCUG 20993 / CIP 104536 / JCM 13569 / NCTC 13031 / TMC 1543 / L948) (Mycobacterium abscessus), this protein is Lipoarabinomannan carrier protein LprG.